The primary structure comprises 366 residues: Protein U1 (366 aa).

It belongs to the herpesviridae US22 family.

The sequence is that of Protein U1 (U1) from Human herpesvirus 6A (strain Uganda-1102) (HHV-6 variant A).